A 306-amino-acid chain; its full sequence is Methionyl-tRNA formyltransferase (306 aa).

109–112 (SILP) serves as a coordination point for (6S)-5,6,7,8-tetrahydrofolate.

It belongs to the Fmt family.

It catalyses the reaction L-methionyl-tRNA(fMet) + (6R)-10-formyltetrahydrofolate = N-formyl-L-methionyl-tRNA(fMet) + (6S)-5,6,7,8-tetrahydrofolate + H(+). Attaches a formyl group to the free amino group of methionyl-tRNA(fMet). The formyl group appears to play a dual role in the initiator identity of N-formylmethionyl-tRNA by promoting its recognition by IF2 and preventing the misappropriation of this tRNA by the elongation apparatus. The sequence is that of Methionyl-tRNA formyltransferase from Herpetosiphon aurantiacus (strain ATCC 23779 / DSM 785 / 114-95).